The chain runs to 842 residues: ATP-binding cassette sub-family B member 6 (842 aa).

The Lumenal portion of the chain corresponds to 1–26 (MVTVGNYCEAEGPVGPAWMQDGLSPC). Residues 1 to 205 (MVTVGNYCEA…SGGLFVLGLW (205 aa)) form a required for the lysosomal targeting region. Residues 1–236 (MVTVGNYCEA…RSQVRSAAQQ (236 aa)) form a required for ATPase activity region. A glycan (N-linked (GlcNAc...) asparagine) is linked at asparagine 6. Cysteine 8 and cysteine 26 form a disulfide bridge. A helical transmembrane segment spans residues 27 to 47 (FFFTLVPSTRMALGTLALVLA). Topologically, residues 48-72 (LPCRRRERPAGADSLSWGAGPRISP) are cytoplasmic. A helical transmembrane segment spans residues 73–93 (YVLQLLLATLQAALPLAGLAG). At 94 to 106 (RVGTARGAPLPSY) the chain is on the lumenal side. A helical transmembrane segment spans residues 107-127 (LLLASVLESLAGACGLWLLVV). Topologically, residues 128-147 (ERSQARQRLAMGIWIKFRHS) are cytoplasmic. Residues 148–168 (PGLLLLWTVAFAAENLALVSW) form a helical membrane-spanning segment. The Lumenal portion of the chain corresponds to 169 to 185 (NSPQWWWARADLGQQVQ). The helical transmembrane segment at 186-206 (FSLWVLRYVVSGGLFVLGLWA) threads the bilayer. Residues 207 to 263 (PGLRPQSYTLQVHEEDQDVERSQVRSAAQQSTWRDFGRKLRLLSGYLWPRGSPALQL) are Cytoplasmic-facing. A helical transmembrane segment spans residues 264 to 284 (VVLICLGLMGLERALNVLVPI). Residues 265–556 (VLICLGLMGL…FGTYYRMIQT (292 aa)) form the ABC transmembrane type-1 domain. At 285–291 (FYRNIVN) the chain is on the lumenal side. The chain crosses the membrane as a helical span at residues 292–312 (LLTEKAPWNSLAWTVTSYVFL). Topologically, residues 313-375 (KFLQGGGTGS…TGEVLRIADR (63 aa)) are cytoplasmic. Residues 376-396 (GTSSVTGLLSYLVFNVIPTLA) form a helical membrane-spanning segment. Aspartate 397 is a topological domain (lumenal). The helical transmembrane segment at 398–418 (IIIGIIYFSMFFNAWFGLIVF) threads the bilayer. Residues 419–499 (LCMSLYLTLT…SSASLVLLNQ (81 aa)) lie on the Cytoplasmic side of the membrane. The chain crosses the membrane as a helical span at residues 500-520 (TQNLVIGLGLLAGSLLCAYFV). Residues 521–529 (TEQKLQVGD) are Lumenal-facing. Residues 530–550 (YVLFGTYIIQLYMPLNWFGTY) form a helical membrane-spanning segment. Residues 551–842 (YRMIQTNFID…EDTKPQTMER (292 aa)) lie on the Cytoplasmic side of the membrane. One can recognise an ABC transporter domain in the interval 590-824 (IEFENVHFSY…GGVYADMWQL (235 aa)). ATP is bound by residues tyrosine 599 and 623-634 (GPSGAGKSTILR).

This sequence belongs to the ABC transporter superfamily. ABCB family. Heavy Metal importer (TC 3.A.1.210) subfamily. As to quaternary structure, homodimer. Post-translationally, N-glycosylated. Widely expressed. High expression is detected in the retinal epithelium. Expressed in mature erythrocytes.

The protein resides in the cell membrane. Its subcellular location is the mitochondrion outer membrane. The protein localises to the endoplasmic reticulum membrane. It is found in the golgi apparatus membrane. It localises to the endosome membrane. The protein resides in the lysosome membrane. Its subcellular location is the late endosome membrane. The protein localises to the early endosome membrane. It is found in the secreted. It localises to the extracellular exosome. The protein resides in the mitochondrion. Its subcellular location is the endosome. The protein localises to the multivesicular body membrane. It is found in the melanosome membrane. The catalysed reaction is heme b(in) + ATP + H2O = heme b(out) + ADP + phosphate + H(+). It carries out the reaction coproporphyrin III(in) + ATP + H2O = coproporphyrin III(out) + ADP + phosphate + H(+). It catalyses the reaction pheophorbide a(in) + ATP + H2O = pheophorbide a(out) + ADP + phosphate + H(+). The enzyme catalyses coproporphyrinogen III(in) + ATP + H2O = coproporphyrinogen III(out) + ADP + phosphate + H(+). The catalysed reaction is protoporphyrin IX(in) + ATP + H2O = protoporphyrin IX(out) + ADP + phosphate + H(+). It carries out the reaction coproporphyrin I(in) + ATP + H2O = coproporphyrin I(out) + ADP + phosphate + H(+). It catalyses the reaction uroporphyrin I(in) + ATP + H2O = uroporphyrin I(out) + ADP + phosphate + H(+). The enzyme catalyses uroporphyrin III(in) + ATP + H2O = uroporphyrin III(out) + ADP + phosphate + H(+). ATPase activity is inhibited by MgATP with an IC(50) of 1.03 mM and up-regulated by coporphyrin III&gt; hemin &gt; protoporphyrin IX. ATPase activity for hemin is up-regulated by glutathione. The ATPase activity is impaired by increasing copper concentrations (0-300 uM). The ATPase activity is stimulated in presence of glutathione for increasing copper concentrations (0-300 uM). In terms of biological role, ATP-dependent transporter that catalyzes the transport of a broad-spectrum of porphyrins from the cytoplasm to the extracellular space through the plasma membrane or into the vesicle lumen. May also function as an ATP-dependent importer of porphyrins from the cytoplasm into the mitochondria, in turn may participate in the de novo heme biosynthesis regulation and in the coordination of heme and iron homeostasis during phenylhydrazine stress. May also play a key role in the early steps of melanogenesis producing PMEL amyloid fibrils. In vitro, it confers to cells a resistance to toxic metal such as arsenic and cadmium and against chemotherapeutics agent such as 5-fluorouracil, SN-38 and vincristin. In addition may play a role in the transition metal homeostasis. The sequence is that of ATP-binding cassette sub-family B member 6 from Homo sapiens (Human).